A 158-amino-acid chain; its full sequence is MSKVSYYTADGLKKLKDELEHLKSVMRPKASQDIADARDKGDLSENAEYDAAKEAQGLLEMRIAKLEEVYANARLIDESQLDVSKVLVLSNVKIKNQSNGMEMKYTLVAESEADLKTGKISVTSPIGKGLLGKSVGEIAEITVPNGTLKFEILEITRE.

Residues 47 to 68 (AEYDAAKEAQGLLEMRIAKLEE) adopt a coiled-coil conformation.

This sequence belongs to the GreA/GreB family.

Functionally, necessary for efficient RNA polymerase transcription elongation past template-encoded arresting sites. The arresting sites in DNA have the property of trapping a certain fraction of elongating RNA polymerases that pass through, resulting in locked ternary complexes. Cleavage of the nascent transcript by cleavage factors such as GreA or GreB allows the resumption of elongation from the new 3'terminus. GreA releases sequences of 2 to 3 nucleotides. The sequence is that of Transcription elongation factor GreA from Flavobacterium johnsoniae (strain ATCC 17061 / DSM 2064 / JCM 8514 / BCRC 14874 / CCUG 350202 / NBRC 14942 / NCIMB 11054 / UW101) (Cytophaga johnsonae).